Here is a 69-residue protein sequence, read N- to C-terminus: UPF0248 protein AF_0420 (69 aa).

It belongs to the UPF0248 family.

The sequence is that of UPF0248 protein AF_0420 from Archaeoglobus fulgidus (strain ATCC 49558 / DSM 4304 / JCM 9628 / NBRC 100126 / VC-16).